Here is a 503-residue protein sequence, read N- to C-terminus: Aromatase (503 aa).

Transmembrane regions (helical) follow at residues 19 to 39, 51 to 71, and 303 to 323; these read EVAPVASIAILLLTGFLLLVW, GYFLGIGPLISHCRFLWMGIG, and MLIAAPDTMSVSVFFMLFLIA. Residues D309 and M374 each contribute to the substrate site. A heme-binding site is contributed by C437.

It belongs to the cytochrome P450 family. The cofactor is heme.

It is found in the endoplasmic reticulum membrane. The protein resides in the microsome membrane. It catalyses the reaction testosterone + 3 reduced [NADPH--hemoprotein reductase] + 3 O2 = 17beta-estradiol + formate + 3 oxidized [NADPH--hemoprotein reductase] + 4 H2O + 4 H(+). It carries out the reaction androst-4-ene-3,17-dione + 3 reduced [NADPH--hemoprotein reductase] + 3 O2 = estrone + formate + 3 oxidized [NADPH--hemoprotein reductase] + 4 H2O + 4 H(+). The enzyme catalyses androst-4-ene-3,17-dione + reduced [NADPH--hemoprotein reductase] + O2 = 19-hydroxyandrost-4-ene-3,17-dione + oxidized [NADPH--hemoprotein reductase] + H2O + H(+). The catalysed reaction is 19-hydroxyandrost-4-ene-3,17-dione + reduced [NADPH--hemoprotein reductase] + O2 = 19-oxo-androst-4-ene-3,17-dione + oxidized [NADPH--hemoprotein reductase] + 2 H2O + H(+). It catalyses the reaction 19-oxo-androst-4-ene-3,17-dione + reduced [NADPH--hemoprotein reductase] + O2 = estrone + formate + oxidized [NADPH--hemoprotein reductase] + H2O + 2 H(+). It carries out the reaction estrone + reduced [NADPH--hemoprotein reductase] + O2 = 2-hydroxyestrone + oxidized [NADPH--hemoprotein reductase] + H2O + H(+). The enzyme catalyses 17beta-hydroxy-5alpha-androstan-3-one + reduced [NADPH--hemoprotein reductase] + O2 = 17beta,19-dihydroxy-3-oxo-5alpha-androstanone + oxidized [NADPH--hemoprotein reductase] + H2O + H(+). The catalysed reaction is 17beta,19-dihydroxy-3-oxo-5alpha-androstanone + reduced [NADPH--hemoprotein reductase] + O2 = 17beta-hydroxy-3,19-dioxo-5alpha-androstanone + oxidized [NADPH--hemoprotein reductase] + 2 H2O + H(+). It catalyses the reaction 17beta-hydroxy-3,19-dioxo-5alpha-androstanone + reduced [NADPH--hemoprotein reductase] + O2 = 17beta-hydroxy-3-oxo-19-nor-5alpha-androst-1-ene + formate + oxidized [NADPH--hemoprotein reductase] + H2O + 2 H(+). The protein operates within steroid hormone biosynthesis. Its function is as follows. A cytochrome P450 monooxygenase that catalyzes the conversion of C19 androgens, androst-4-ene-3,17-dione (androstenedione) and testosterone to the C18 estrogens, estrone and estradiol, respectively. Catalyzes three successive oxidations of C19 androgens: two conventional oxidations at C19 yielding 19-hydroxy and 19-oxo/19-aldehyde derivatives, followed by a third oxidative aromatization step that involves C1-beta hydrogen abstraction combined with cleavage of the C10-C19 bond to yield a phenolic A ring and formic acid. Alternatively, the third oxidative reaction yields a 19-norsteroid and formic acid. Converts dihydrotestosterone to delta1,10-dehydro 19-nordihydrotestosterone and may play a role in homeostasis of this potent androgen. Also displays 2-hydroxylase activity toward estrone. Mechanistically, uses molecular oxygen inserting one oxygen atom into a substrate, and reducing the second into a water molecule, with two electrons provided by NADPH via cytochrome P450 reductase (CPR; NADPH-ferrihemoprotein reductase). This Leucopleurus acutus (Atlantic white-sided dolphin) protein is Aromatase (CYP19A1).